We begin with the raw amino-acid sequence, 340 residues long: Phosphoribosylformylglycinamidine cyclo-ligase (340 aa).

The protein belongs to the AIR synthase family.

Its subcellular location is the cytoplasm. It catalyses the reaction 2-formamido-N(1)-(5-O-phospho-beta-D-ribosyl)acetamidine + ATP = 5-amino-1-(5-phospho-beta-D-ribosyl)imidazole + ADP + phosphate + H(+). The protein operates within purine metabolism; IMP biosynthesis via de novo pathway; 5-amino-1-(5-phospho-D-ribosyl)imidazole from N(2)-formyl-N(1)-(5-phospho-D-ribosyl)glycinamide: step 2/2. The sequence is that of Phosphoribosylformylglycinamidine cyclo-ligase from Streptococcus pyogenes serotype M3 (strain ATCC BAA-595 / MGAS315).